The following is a 338-amino-acid chain: Photosystem II assembly lipoprotein Ycf48 (338 aa).

A signal peptide spans 1–23 (MKRLFSNVINLTLVLIVGVALSG). A lipid anchor (N-palmitoyl cysteine) is attached at C24. The S-diacylglycerol cysteine moiety is linked to residue C24.

The protein belongs to the Ycf48 family. Part of early PSII assembly complexes which includes D1 (psbA) and PsbI; not found in mature PSII. Binds to the lumenal side of PSII complexes. Interacts with YidC.

The protein resides in the cellular thylakoid membrane. Functionally, a factor required for optimal assembly of photosystem II (PSII), acting in the early stages of PSII assembly. Also plays a role in replacement of photodamaged D1 (psbA). Assists YidC in synthesis of chlorophyll-binding proteins. The sequence is that of Photosystem II assembly lipoprotein Ycf48 from Prochlorococcus marinus (strain NATL2A).